The chain runs to 328 residues: Probable cell division protein WhiA (328 aa).

The H-T-H motif DNA-binding region spans 275 to 308; it reads SLEELGQLHDPVLTKDAIAGRIRRLLAMADKRAE.

It belongs to the WhiA family.

Functionally, involved in cell division and chromosome segregation. The chain is Probable cell division protein WhiA from Nocardioides sp. (strain ATCC BAA-499 / JS614).